The primary structure comprises 222 residues: MESPEKFTNSKEVIAFLAETFPKCFSIEGEARPLKIGIFQDLAERLEEDERVSKTLLRSTLRHYTNSWRYLYSIKEGANRVDLDGVEGDAIEKEHADHAKQQLDESKAKAAEKRKAKLAQQPKRKDKRQFNRPKGEKSANSDHADTKRGTKPKNNRPNTTPPAKLTDSDLQQGTQVTVKLGKAPMPAVITEVAKDGIHVQLDSGMVVKVNADALRLARSKRS.

A compositionally biased stretch (basic and acidic residues) spans E94–K113. A disordered region spans residues E94–Q171. The segment covering R114–N131 has biased composition (basic residues). Positions P133 to R148 are enriched in basic and acidic residues. A compositionally biased stretch (low complexity) spans N155–K164.

The protein belongs to the ProQ family.

The protein resides in the cytoplasm. RNA chaperone with significant RNA binding, RNA strand exchange and RNA duplexing activities. In Alteromonas mediterranea (strain DSM 17117 / CIP 110805 / LMG 28347 / Deep ecotype), this protein is RNA chaperone ProQ.